Reading from the N-terminus, the 196-residue chain is Adenylate kinase (196 aa).

9–17 is a binding site for ATP; the sequence is GIPGVGKST.

The protein belongs to the archaeal adenylate kinase family.

It localises to the cytoplasm. It carries out the reaction AMP + ATP = 2 ADP. This chain is Adenylate kinase, found in Thermococcus kodakarensis (strain ATCC BAA-918 / JCM 12380 / KOD1) (Pyrococcus kodakaraensis (strain KOD1)).